Consider the following 68-residue polypeptide: Large ribosomal subunit protein bL35 (68 aa).

Residues 1–25 show a composition bias toward basic residues; that stretch reads MGTKIKTHKGTKKRFRLSAKGKAMH. A disordered region spans residues 1 to 43; the sequence is MGTKIKTHKGTKKRFRLSAKGKAMHRQSGTSHLAKGLSKKRRR.

Belongs to the bacterial ribosomal protein bL35 family.

The polypeptide is Large ribosomal subunit protein bL35 (Rhodopirellula baltica (strain DSM 10527 / NCIMB 13988 / SH1)).